The sequence spans 513 residues: ATP synthase subunit alpha (513 aa).

169 to 176 (GDRQCGKT) is a binding site for ATP.

This sequence belongs to the ATPase alpha/beta chains family. In terms of assembly, F-type ATPases have 2 components, CF(1) - the catalytic core - and CF(0) - the membrane proton channel. CF(1) has five subunits: alpha(3), beta(3), gamma(1), delta(1), epsilon(1). CF(0) has three main subunits: a(1), b(2) and c(9-12). The alpha and beta chains form an alternating ring which encloses part of the gamma chain. CF(1) is attached to CF(0) by a central stalk formed by the gamma and epsilon chains, while a peripheral stalk is formed by the delta and b chains.

It localises to the cell inner membrane. It catalyses the reaction ATP + H2O + 4 H(+)(in) = ADP + phosphate + 5 H(+)(out). In terms of biological role, produces ATP from ADP in the presence of a proton gradient across the membrane. The alpha chain is a regulatory subunit. This Burkholderia mallei (strain NCTC 10229) protein is ATP synthase subunit alpha.